The primary structure comprises 93 residues: Protein ea8.5 (93 aa).

In Escherichia phage lambda (Bacteriophage lambda), this protein is Protein ea8.5 (ea8.5).